Reading from the N-terminus, the 103-residue chain is Large ribosomal subunit protein bL21 (103 aa).

The protein belongs to the bacterial ribosomal protein bL21 family. In terms of assembly, part of the 50S ribosomal subunit. Contacts protein L20.

Its function is as follows. This protein binds to 23S rRNA in the presence of protein L20. The polypeptide is Large ribosomal subunit protein bL21 (Pseudoalteromonas atlantica (strain T6c / ATCC BAA-1087)).